Consider the following 522-residue polypeptide: Peptide methionine sulfoxide reductase MsrA/MsrB (522 aa).

The Thioredoxin domain maps to 17–174 (LALGACSPKI…ALALIRDPNA (158 aa)). C68 and C71 are disulfide-bonded. The tract at residues 199-354 (RTIYLAGGCF…PNGYCHIDIR (156 aa)) is peptide methionine sulfoxide reductase A. The active site involves C207. The MsrB domain occupies 383–506 (DAELKRTLTE…NGASLKFIPL (124 aa)). A disulfide bridge connects residues C440 and C495. The Nucleophile role is filled by C495.

The protein in the N-terminal section; belongs to the thioredoxin family. In the central section; belongs to the MsrA Met sulfoxide reductase family. It in the C-terminal section; belongs to the MsrB Met sulfoxide reductase family.

It carries out the reaction L-methionyl-[protein] + [thioredoxin]-disulfide + H2O = L-methionyl-(S)-S-oxide-[protein] + [thioredoxin]-dithiol. The enzyme catalyses [thioredoxin]-disulfide + L-methionine + H2O = L-methionine (S)-S-oxide + [thioredoxin]-dithiol. It catalyses the reaction L-methionyl-[protein] + [thioredoxin]-disulfide + H2O = L-methionyl-(R)-S-oxide-[protein] + [thioredoxin]-dithiol. Functionally, has an important function as a repair enzyme for proteins that have been inactivated by oxidation. Catalyzes the reversible oxidation-reduction of methionine sulfoxide in proteins to methionine. The sequence is that of Peptide methionine sulfoxide reductase MsrA/MsrB (msrAB) from Neisseria meningitidis serogroup B (strain ATCC BAA-335 / MC58).